A 1837-amino-acid polypeptide reads, in one-letter code: Zinc finger SWIM domain-containing protein 8 (1837 aa).

3 positions are modified to phosphoserine: Ser36, Ser48, and Ser53. Residues 45 to 65 (RKQSAGPNSPTGGGGGGGSGG) are disordered. The span at 55–65 (TGGGGGGGSGG) shows a compositional bias: gly residues. The segment at 172–208 (YNVAVMFDRCRVTSCSCTCGAGAKWCTHVVALCLFRI) adopts an SWIM-type zinc-finger fold. Ser437 bears the Phosphoserine mark. Disordered regions lie at residues 514–727 (SRPG…EEDD), 803–823 (NPPD…KVST), and 1016–1232 (SQTH…VPNQ). Composition is skewed to basic and acidic residues over residues 523-532 (GLEESRDRPR) and 566-575 (LSAEGGDKAL). Ser567 carries the post-translational modification Phosphoserine. Over residues 579–602 (GPGGGKAKALGGAGSGSKGSAGGG) the composition is skewed to gly residues. A compositionally biased stretch (polar residues) spans 1019 to 1040 (HKPQTLSSFYSSSRPTTASQRS). The span at 1119–1130 (SRGGYNGRGWGS) shows a compositional bias: gly residues. Residue Thr1139 is modified to Phosphothreonine. The segment covering 1144-1159 (IDSSAPETTSDSSPTL) has biased composition (polar residues). Phosphoserine occurs at positions 1153, 1156, and 1160. Residues 1174–1209 (GRGQDSDSISSSSSDSLGSSSSSGSRRASASGGARA) show a composition bias toward low complexity. Over residues 1210 to 1226 (KTVEVGRYKGRRPESHA) the composition is skewed to basic and acidic residues. Ser1267 carries the post-translational modification Phosphoserine. 2 disordered regions span residues 1442–1464 (SASG…GGPG) and 1635–1656 (QPSP…SQPV). The span at 1447–1464 (RAGGEAGRGMPEGRGGPG) shows a compositional bias: gly residues. A Phosphoserine modification is found at Ser1836.

It belongs to the ZSWIM8 family. As to quaternary structure, component of the SCF-like E3 ubiquitin-protein ligase complex which contains CUL3, RBX1, ELOB, ELOC and ZSWIM8. (Microbial infection) Interacts with Zika virus protein NS5; this interaction allows STAT2 binding and subsequent proteasomal degradation.

It is found in the cytoplasm. It localises to the cytosol. Its pathway is protein modification; protein ubiquitination. In terms of biological role, substrate recognition component of a SCF-like E3 ubiquitin-protein ligase complex that promotes target-directed microRNA degradation (TDMD), a process that mediates degradation of microRNAs (miRNAs). The SCF-like E3 ubiquitin-protein ligase complex acts by catalyzing ubiquitination and subsequent degradation of AGO proteins (AGO1, AGO2, AGO3 and/or AGO4), thereby exposing miRNAs for degradation. Specifically recognizes and binds AGO proteins when they are engaged with a TDMD target. May also act as a regulator of axon guidance: specifically recognizes misfolded ROBO3 and promotes its ubiquitination and subsequent degradation. Plays an essential role for proper embryonic development of heart and lung. Controls protein quality of DAB1, a key signal molecule for brain development, thus protecting its signaling strength. Mechanistically, recognizes intrinsically disordered regions of DAB1 and eliminates misfolded DAB1 that cannot be properly phosphorylated. Functionally, (Microbial infection) Participates in Zika virus inhibition of IFN signaling by acting as a scaffold protein to connect ZSWIM8/CUL3 ligase complex and STAT2, leading to STAT2 degradation. This Homo sapiens (Human) protein is Zinc finger SWIM domain-containing protein 8.